Reading from the N-terminus, the 341-residue chain is Follistatin (341 aa).

A signal peptide spans 1-29 (MLNERIQPGMIFLLTVSLCHFMEYRAVQA). A TB domain is found at 30–103 (GNCWLQQSKN…TCENVDCGPG (74 aa)). 8 disulfides stabilise this stretch: C32–C55, C42–C88, C56–C91, C95–C106, C100–C116, C118–C150, C122–C143, and C132–C164. The N-linked (GlcNAc...) asparagine glycan is linked to N72. Residues 94-117 (TCENVDCGPGKKCKMNKKNKPRCV) enclose the Follistatin-like 1 domain. Kazal-like domains lie at 100–166 (CGPG…KCKK), 186–241 (NAYC…KCIK), and 264–318 (RGRC…SCNS). A glycan (N-linked (GlcNAc...) asparagine) is linked at N124. Residues 167–190 (TCRDVLCPGSSSCVVDQTNNAYCV) form the Follistatin-like 2 domain. 3 cysteine pairs are disulfide-bonded: C192–C225, C196–C218, and C207–C239. The 25-residue stretch at 244 to 268 (SCEDIQCSAGKKCLWDSRVGRGRCA) folds into the Follistatin-like 3 domain. Intrachain disulfides connect C270-C302, C274-C295, and C284-C316. The N-linked (GlcNAc...) asparagine glycan is linked to N288. The span at 321–333 (EDTEEEEEEEEPD) shows a compositional bias: acidic residues. Residues 321–341 (EDTEEEEEEEEPDYSFVISSW) are disordered.

In terms of assembly, monomer. As to expression, spemann organizer and notochord.

The protein resides in the secreted. Functionally, binds directly to activin and functions as an activin antagonist which plays a role in neural induction. The short isoform is a more potent inhibitor of activin than the long isoform. Specific inhibitor of the biosynthesis and secretion of pituitary follicle stimulating hormone (FSH). The sequence is that of Follistatin (fst) from Xenopus laevis (African clawed frog).